Consider the following 229-residue polypeptide: E3 ubiquitin ligase TRIM40 (229 aa).

The RING-type zinc-finger motif lies at 14-57 (CPICQESLKEAVSTNCGHLFCRVCLTQHVEKASASGVFCCPLCR). The segment at 66–107 (GTGYICPNHQKRVCRFCEESRLLLCVECLVSPEHMSHHELTI) adopts a B box-type zinc-finger fold. Zn(2+) is bound by residues cysteine 71, histidine 74, cysteine 93, and histidine 99. Residues 107 to 154 (IENALSHYKERLNRRSRKLRKDIAELQRLKAQQEKKLQALQQWLGQLE) adopt a coiled-coil conformation.

This sequence belongs to the TRIM/RBCC family. As to quaternary structure, interacts with NEDD8.

It carries out the reaction S-ubiquitinyl-[E2 ubiquitin-conjugating enzyme]-L-cysteine + [acceptor protein]-L-lysine = [E2 ubiquitin-conjugating enzyme]-L-cysteine + N(6)-ubiquitinyl-[acceptor protein]-L-lysine.. Functionally, E3 ubiquitin-protein ligase that plays a role in the limitation of the innate immune response. Mediates inhibition of the RLR signaling pathway by ubiquitinating RIGI and IFIH1 receptors, leading to their proteasomal degradation. Also promotes the neddylation of IKBKG/NEMO, stabilizing NFKBIA, and thereby inhibiting of NF-kappa-B nuclear translocation and activation. The protein is E3 ubiquitin ligase TRIM40 (TRIM40) of Pan troglodytes (Chimpanzee).